We begin with the raw amino-acid sequence, 252 residues long: DNA-directed RNA polymerase III subunit rpc8 (252 aa).

The segment at 214-252 (WTNQSAGDDDENEEDGGENQDDEVAEDDGGEEPTIEEDE) is disordered. Positions 220–252 (GDDDENEEDGGENQDDEVAEDDGGEEPTIEEDE) are enriched in acidic residues.

The protein belongs to the eukaryotic RPB7/RPC8 RNA polymerase subunit family. Component of the RNA polymerase III (Pol III) complex consisting of several subunits.

It is found in the nucleus. In terms of biological role, DNA-dependent RNA polymerase catalyzes the transcription of DNA into RNA using the four ribonucleoside triphosphates as substrates. This chain is DNA-directed RNA polymerase III subunit rpc8 (polr3h-1), found in Dictyostelium discoideum (Social amoeba).